The primary structure comprises 135 residues: Succinate dehydrogenase assembly factor 2, mitochondrial (135 aa).

It belongs to the SDHAF2 family. Interacts with the flavoprotein subunit within the SDH catalytic dimer.

It is found in the mitochondrion matrix. Its function is as follows. Plays an essential role in the assembly of succinate dehydrogenase (SDH), an enzyme complex (also referred to as respiratory complex II) that is a component of both the tricarboxylic acid (TCA) cycle and the mitochondrial electron transport chain, and which couples the oxidation of succinate to fumarate with the reduction of ubiquinone (coenzyme Q) to ubiquinol. Required for flavinylation (covalent attachment of FAD) of the flavoprotein subunit of the SDH catalytic dimer. The polypeptide is Succinate dehydrogenase assembly factor 2, mitochondrial (Meyerozyma guilliermondii (strain ATCC 6260 / CBS 566 / DSM 6381 / JCM 1539 / NBRC 10279 / NRRL Y-324) (Yeast)).